Reading from the N-terminus, the 371-residue chain is DNA replication and repair protein RecF (371 aa).

30-37 (GPNAQGKT) is an ATP binding site.

It belongs to the RecF family.

Its subcellular location is the cytoplasm. The RecF protein is involved in DNA metabolism; it is required for DNA replication and normal SOS inducibility. RecF binds preferentially to single-stranded, linear DNA. It also seems to bind ATP. The chain is DNA replication and repair protein RecF from Desulforamulus reducens (strain ATCC BAA-1160 / DSM 100696 / MI-1) (Desulfotomaculum reducens).